The sequence spans 551 residues: Pyrroline-5-carboxylate reductase 1 (551 aa).

Residues 279-551 (LYTQKQQNKK…RHEVKTEQIN (273 aa)) are disordered. Composition is skewed to low complexity over residues 282–298 (QKQQ…QQHQ), 306–342 (QQHQ…YGHQ), 383–415 (QQYQ…SNQR), 424–441 (KSPQ…QPSS), 448–475 (QQQQ…QQQP), 487–496 (QQQQPQQQQQ), and 503–520 (YNNN…NNYN). Basic and acidic residues predominate over residues 537-551 (YHDEKRHEVKTEQIN).

It belongs to the pyrroline-5-carboxylate reductase family. As to quaternary structure, homodecamer; composed of 5 homodimers.

The catalysed reaction is L-proline + NADP(+) = (S)-1-pyrroline-5-carboxylate + NADPH + 2 H(+). The enzyme catalyses L-proline + NAD(+) = (S)-1-pyrroline-5-carboxylate + NADH + 2 H(+). It functions in the pathway amino-acid biosynthesis; L-proline biosynthesis; L-proline from L-glutamate 5-semialdehyde: step 1/1. This Dictyostelium discoideum (Social amoeba) protein is Pyrroline-5-carboxylate reductase 1 (pycr1).